Reading from the N-terminus, the 813-residue chain is Lon protease (813 aa).

One can recognise a Lon N-terminal domain in the interval L30–I225. G376–T383 is an ATP binding site. Residues D612–K793 enclose the Lon proteolytic domain. Residues S699 and K742 contribute to the active site.

The protein belongs to the peptidase S16 family. In terms of assembly, homohexamer. Organized in a ring with a central cavity.

It localises to the cytoplasm. It carries out the reaction Hydrolysis of proteins in presence of ATP.. Functionally, ATP-dependent serine protease that mediates the selective degradation of mutant and abnormal proteins as well as certain short-lived regulatory proteins. Required for cellular homeostasis and for survival from DNA damage and developmental changes induced by stress. Degrades polypeptides processively to yield small peptide fragments that are 5 to 10 amino acids long. Binds to DNA in a double-stranded, site-specific manner. The polypeptide is Lon protease (Cytophaga hutchinsonii (strain ATCC 33406 / DSM 1761 / CIP 103989 / NBRC 15051 / NCIMB 9469 / D465)).